We begin with the raw amino-acid sequence, 334 residues long: Gap junction alpha-2 protein (334 aa).

At 1–12 the chain is on the cytoplasmic side; it reads MAGWELLKLLLD. Residues 13–35 form a helical membrane-spanning segment; the sequence is DVQEHSTLIGKVWLTVLFIFRIF. Over 36-75 the chain is Extracellular; sequence ILSVAGESVWTDEQSDFICNTQQPGCTNVCYDQAFPISHV. A helical transmembrane segment spans residues 76–98; that stretch reads RYWVLQFLFVSTPTLIYLGHMVY. At 99–153 the chain is on the cytoplasmic side; sequence LSKKEEKERQKENESRILVANEAQTEVHSSATKKIRIQGPLMCTYTTSVVFKSIF. A helical transmembrane segment spans residues 154–176; that stretch reads EAGFLLGQWYIYGFVMSPIFVCE. At 177–207 the chain is on the extracellular side; the sequence is RIPCKHKVECFVSRPMEKTIFIIFMLVVSLI. A helical transmembrane segment spans residues 208–230; the sequence is SLLLNLMELIHLSFKCFQHGIKE. The Cytoplasmic portion of the chain corresponds to 231 to 334; the sequence is GATCSPTGIP…HQTSSKQQYV (104 aa).

The protein belongs to the connexin family. Alpha-type (group II) subfamily. As to quaternary structure, a connexon is composed of a hexamer of connexins. As to expression, resides primarily in the ovary, oocytes and early embryos.

It is found in the cell membrane. The protein localises to the cell junction. The protein resides in the gap junction. One gap junction consists of a cluster of closely packed pairs of transmembrane channels, the connexons, through which materials of low MW diffuse from one cell to a neighboring cell. This Xenopus laevis (African clawed frog) protein is Gap junction alpha-2 protein (gja2).